The sequence spans 876 residues: MSSSSVSGIREAFLDFFEKQGHTRYPSAPLIAEGDASLLFTNAGMVPFKQRFITGVSDVKTATTSQKCLRAGGKHNDLENVGYTNRHHTFFEMLGNFSFGDYFKETAIELAWRFVTKELGLSKERLWITVYSEDQEAFDIWKKITGYTDHKIIRISTSDNFWSMGDTGPCGPCSEIFYDYGDGVPGGLPGTDESDGARYTEIWNLVFMQYNRDESGELHKLPRGCIDTGMGLERIAAVMQGVCDNYETDMFQAIIDRSRSIFGSHDHPIAHRVIADHVRAASFLIAEGLTPGNEGRNYVLRRIIRRAVRYIYQIVGDKFSLHEVVPVLTREGSAGYMGNAYPEIVKAEQSIVSTLKIEEDGFADTLRRGTGILEQEIRGLKSGEVLSGEIAFKLYDTYGFPLDITLDVAKERGLKFDEDGFNRCMAKQKEQSRKHWKGSGEAQTASSHILNKHKATSFVGYENHRVKSMVKEIFCSGEAVTSMGEGEEGIAVLDITPFYAESGGQEGDTGLLKVVTTKCGSVAEVVDTTKSNNVHLHKIRVIRGTLKVGDVVEAVVDKQRREKLRANHSATHILQSVLRTLIGEGIQQKGSLVAADKLRFDFSHALPLTKEQLRTVEMEVNRQIMANQPVIIDHCSLEDAVQEGAIALFGEKYNDQNVRVVSMGSSKELCGGTHVRFTGDIGAFRIISETGIAQGVRRIEAITGHEVVSSMNRDSESLQQVAECLSVPVDQVIEKLKKVFVEQREINKKMATICYTHMNSCAKCIEVGSEIKLYVGEFSNIPVEVVASYVKEKMHTNEVLAISTTDGKRTTFIVGVGESAIKRIKATDIVKALQQIQGKGGGNASIARASLPSEYSAKAAEIIRQTVIDAIQNSGA.

Residues histidine 568, histidine 572, cysteine 670, and histidine 674 each coordinate Zn(2+).

This sequence belongs to the class-II aminoacyl-tRNA synthetase family. Zn(2+) is required as a cofactor.

It is found in the cytoplasm. The catalysed reaction is tRNA(Ala) + L-alanine + ATP = L-alanyl-tRNA(Ala) + AMP + diphosphate. Functionally, catalyzes the attachment of alanine to tRNA(Ala) in a two-step reaction: alanine is first activated by ATP to form Ala-AMP and then transferred to the acceptor end of tRNA(Ala). Also edits incorrectly charged Ser-tRNA(Ala) and Gly-tRNA(Ala) via its editing domain. This Anaplasma phagocytophilum (strain HZ) protein is Alanine--tRNA ligase.